The following is a 632-amino-acid chain: Extracellular metalloproteinase 1 (632 aa).

The first 19 residues, 1 to 19 (MHGLLLAAGLLSLPLRVLA), serve as a signal peptide directing secretion. Positions 20–243 (HPQPSTSLTS…VHNVVDYVSH (224 aa)) are excised as a propeptide. N-linked (GlcNAc...) asparagine glycosylation occurs at Asn-284. His-427 lines the Zn(2+) pocket. Residue Glu-428 is part of the active site. His-431 provides a ligand contact to Zn(2+). 2 N-linked (GlcNAc...) asparagine glycosylation sites follow: Asn-591 and Asn-620.

It belongs to the peptidase M36 family. Zn(2+) serves as cofactor.

It localises to the secreted. Its function is as follows. Secreted metalloproteinase that allows assimilation of proteinaceous substrates and probably acts as a virulence factor. This is Extracellular metalloproteinase 1 (MEP1) from Arthroderma gypseum (strain ATCC MYA-4604 / CBS 118893) (Microsporum gypseum).